A 420-amino-acid polypeptide reads, in one-letter code: MDKLVIEGGYPLSGEVVVSGAKNAALPILCAGLLSAQPVHLENVPDLQDVRTMLKLLGQMGVQIESGDGRVSLNASKVDNLVAPYEMVKTMRASILVLGPLVARFGHARVSLPGGCAIGARPVDQHIKGLQAMGAEITIEHGFIEARAKRLKGTRIVTDMITVTGTENLLMAAVLAEGETVIENAAREPEVGDLAHLLVEMGAKIEGIGTDRLVIQGVDKLHGAKHTVIPDRIEAGTFLCAVAAAGGDVTLRKVRPLILEAVTEKLREAGVTVEEGDDWMRVRMNKRPNAVTFRTSEYPAFPTDMQAQFMALNTIATGTSQVVETIFENRFMHVQELNRLGANITIDGNTALVTGVEQLSGAKVMATDLRASASLVIAALRADGETLIDRIYHLDRGYDRMETKLTALGAKVRRVSGSQA.

22–23 lines the phosphoenolpyruvate pocket; sequence KN. R92 serves as a coordination point for UDP-N-acetyl-alpha-D-glucosamine. Residue C116 is the Proton donor of the active site. C116 carries the 2-(S-cysteinyl)pyruvic acid O-phosphothioketal modification. Residues 121–125, D304, and I326 contribute to the UDP-N-acetyl-alpha-D-glucosamine site; that span reads RPVDQ.

Belongs to the EPSP synthase family. MurA subfamily.

The protein localises to the cytoplasm. The enzyme catalyses phosphoenolpyruvate + UDP-N-acetyl-alpha-D-glucosamine = UDP-N-acetyl-3-O-(1-carboxyvinyl)-alpha-D-glucosamine + phosphate. Its pathway is cell wall biogenesis; peptidoglycan biosynthesis. Its function is as follows. Cell wall formation. Adds enolpyruvyl to UDP-N-acetylglucosamine. This chain is UDP-N-acetylglucosamine 1-carboxyvinyltransferase, found in Paraburkholderia xenovorans (strain LB400).